The chain runs to 214 residues: MSLLIEQARYHLSAHNARQLPDDGGYEVAFAGRSNAGKSSALNALTRQNALARVSKTPGRTQQLVFFQIQPERYLVDLPGYGYAKVPQDLQAHWQAFIDRYFRTREALRGLVVVMDIRHPLKDYDLQMLGYAAERGLPAHGLLTKADKLGRGQQMQTLQKVKKEVTSRFGDSVTVQTYSGESRQGVDELRGIVGGWLGLDGAPPAAEGEPGQAP.

Residues 24 to 199 (GGYEVAFAGR…RGIVGGWLGL (176 aa)) enclose the EngB-type G domain. Residues 32 to 39 (GRSNAGKS), 59 to 63 (GRTQQ), 77 to 80 (DLPG), 144 to 147 (TKAD), and 178 to 180 (YSG) each bind GTP. Positions 39 and 61 each coordinate Mg(2+).

The protein belongs to the TRAFAC class TrmE-Era-EngA-EngB-Septin-like GTPase superfamily. EngB GTPase family. Mg(2+) is required as a cofactor.

Necessary for normal cell division and for the maintenance of normal septation. The chain is Probable GTP-binding protein EngB from Xanthomonas axonopodis pv. citri (strain 306).